The chain runs to 885 residues: MERHFVFIATYLLIFHLVQAQNQTGFISVDCGLSLLESPYDAPQTGLTYTSDADLVASGKTGRLAKEFEPLVDKPTLTLRYFPEGVRNCYNLNVTSDTNYLIKATFVYGNYDGLNVGPNFNLYLGPNLWTTVSSNDTIEEIILVTRSNSLQVCLVKTGISIPFINMLELRPMKKNMYVTQSGSLKYLFRGYISNSSTRIRFPDDVYDRKWYPLFDDSWTQVTTNLKVNTSITYELPQSVMAKAATPIKANDTLNITWTVEPPTTQFYSYVHIAEIQALRANETREFNVTLNGEYTFGPFSPIPLKTASIVDLSPGQCDGGRCILQVVKTLKSTLPPLLNAIEAFTVIDFPQMETNENDVAGIKNVQGTYGLSRISWQGDPCVPKQLLWDGLNCKNSDISTPPIITSLDLSSSGLTGIITQAIKNLTHLQILDLSDNNLTGEVPEFLADIKSLLVINLSGNNLSGSVPPSLLQKKGMKLNVEGNPHILCTTGSCVKKKEDGHKKKSVIVPVVASIASIAVLIGALVLFLILRKKRSPKVEGPPPSYMQASDGRLPRSSEPAIVTKNRRFSYSQVVIMTNNFQRILGKGGFGMVYHGFVNGTEQVAVKILSHSSSQGYKQFKAEVELLLRVHHKNLVGLVGYCDEGDNLALIYEYMANGDLKEHMSGTRNRFILNWGTRLKIVIESAQGLEYLHNGCKPPMVHRDVKTTNILLNEHFEAKLADFGLSRSFLIEGETHVSTVVAGTPGYLDPEYHRTNWLTEKSDVYSFGILLLEIITNRHVIDQSREKPHIGEWVGVMLTKGDIQSIMDPSLNEDYDSGSVWKAVELAMSCLNHSSARRPTMSQVVIELNECLASENARGGASRDMESKSSIEVSLTFGTEVSPNAR.

The first 20 residues, 1-20, serve as a signal peptide directing secretion; it reads MERHFVFIATYLLIFHLVQA. The Extracellular segment spans residues 21-509; sequence QNQTGFISVD…GHKKKSVIVP (489 aa). N-linked (GlcNAc...) asparagine glycans are attached at residues Asn-22, Asn-93, Asn-135, Asn-194, Asn-228, Asn-250, Asn-254, Asn-281, Asn-287, Asn-424, Asn-437, Asn-456, and Asn-461. LRR repeat units lie at residues 403–424, 427–447, and 451–473; these read IITS…AIKN, HLQI…EFLA, and SLLV…LLQK. A helical membrane pass occupies residues 510–530; that stretch reads VVASIASIAVLIGALVLFLIL. The Cytoplasmic portion of the chain corresponds to 531-885; sequence RKKRSPKVEG…FGTEVSPNAR (355 aa). One can recognise a Protein kinase domain in the interval 578 to 851; the sequence is NNFQRILGKG…QVVIELNECL (274 aa). ATP is bound by residues 584–592 and Lys-606; that span reads LGKGGFGMV. Tyr-651 carries the post-translational modification Phosphotyrosine. Asp-703 (proton acceptor) is an active-site residue. Ser-737 is subject to Phosphoserine. Residues Thr-738 and Thr-743 each carry the phosphothreonine modification. Phosphotyrosine is present on Tyr-751.

Belongs to the protein kinase superfamily. Ser/Thr protein kinase family.

The protein resides in the membrane. The catalysed reaction is L-seryl-[protein] + ATP = O-phospho-L-seryl-[protein] + ADP + H(+). It carries out the reaction L-threonyl-[protein] + ATP = O-phospho-L-threonyl-[protein] + ADP + H(+). This Arabidopsis thaliana (Mouse-ear cress) protein is Probable LRR receptor-like serine/threonine-protein kinase At1g51820.